The primary structure comprises 100 residues: MAKKSMIAREVKRKKLVKKYAAKRKSLLDEFNAAKDPMERLEIHRKIQGLPRNSAPNRVRNRCWATGKPRGVYRDFGLCRNQLRQRAHNGELPGVVKSSW.

Belongs to the universal ribosomal protein uS14 family. Part of the 30S ribosomal subunit. Contacts proteins S3 and S10.

Binds 16S rRNA, required for the assembly of 30S particles and may also be responsible for determining the conformation of the 16S rRNA at the A site. This chain is Small ribosomal subunit protein uS14, found in Prochlorococcus marinus (strain MIT 9215).